Consider the following 106-residue polypeptide: ATP-dependent Clp protease adapter protein ClpS (106 aa).

The protein belongs to the ClpS family. Binds to the N-terminal domain of the chaperone ClpA.

Involved in the modulation of the specificity of the ClpAP-mediated ATP-dependent protein degradation. The polypeptide is ATP-dependent Clp protease adapter protein ClpS (Yersinia enterocolitica serotype O:8 / biotype 1B (strain NCTC 13174 / 8081)).